The primary structure comprises 596 residues: Histone deacetylase 9 (596 aa).

Basic and acidic residues-rich tracts occupy residues R132–E153 and R160–S172. Disordered stretches follow at residues R132–S172, H214–R258, S293–A313, and Q522–T596. The segment at S172–P222 is interaction with mef2. Over residues S221–G237 the composition is skewed to pro residues. A compositionally biased stretch (low complexity) spans S293–V312. A compositionally biased stretch (basic and acidic residues) spans Q522–G536. Residues Q541–L558 are compositionally biased toward polar residues. A compositionally biased stretch (basic and acidic residues) spans K567–S585. The segment covering E586–T596 has biased composition (polar residues).

This sequence belongs to the histone deacetylase family. HD type 2 subfamily. Homodimer. Interacts with mef2. In terms of tissue distribution, broadly expressed.

The protein resides in the nucleus. It carries out the reaction N(6)-acetyl-L-lysyl-[histone] + H2O = L-lysyl-[histone] + acetate. Devoided of intrinsic deacetylase activity, promotes the deacetylation of lysine residues on the N-terminal part of the core histones (H2A, H2B, H3 and H4) by recruiting other histone deacetylases. Histone deacetylation gives a tag for epigenetic repression and plays an important role in transcriptional regulation, cell cycle progression and developmental events. Represses MEF2-dependent transcription. The polypeptide is Histone deacetylase 9 (hdac9) (Xenopus laevis (African clawed frog)).